Reading from the N-terminus, the 476-residue chain is Proline--tRNA ligase (476 aa).

This sequence belongs to the class-II aminoacyl-tRNA synthetase family. ProS type 3 subfamily. In terms of assembly, homodimer.

The protein localises to the cytoplasm. It carries out the reaction tRNA(Pro) + L-proline + ATP = L-prolyl-tRNA(Pro) + AMP + diphosphate. Catalyzes the attachment of proline to tRNA(Pro) in a two-step reaction: proline is first activated by ATP to form Pro-AMP and then transferred to the acceptor end of tRNA(Pro). In Mycoplasma mobile (strain ATCC 43663 / 163K / NCTC 11711) (Mesomycoplasma mobile), this protein is Proline--tRNA ligase.